A 332-amino-acid chain; its full sequence is Phenylalanine--tRNA ligase alpha subunit (332 aa).

Glu254 contacts Mg(2+).

This sequence belongs to the class-II aminoacyl-tRNA synthetase family. Phe-tRNA synthetase alpha subunit type 1 subfamily. In terms of assembly, tetramer of two alpha and two beta subunits. Mg(2+) serves as cofactor.

The protein resides in the cytoplasm. The catalysed reaction is tRNA(Phe) + L-phenylalanine + ATP = L-phenylalanyl-tRNA(Phe) + AMP + diphosphate + H(+). In Hydrogenovibrio crunogenus (strain DSM 25203 / XCL-2) (Thiomicrospira crunogena), this protein is Phenylalanine--tRNA ligase alpha subunit.